The following is a 195-amino-acid chain: uncharacterized protein (195 aa).

A signal peptide spans 1–20; that stretch reads MLKFRLILTVLTVLLITVNG. The segment at 26–195 is disordered; that stretch reads IENKSSTSSS…LHNQYPPQQN (170 aa). Asparagine 28 is a glycosylation site (N-linked (GlcNAc...) asparagine). 2 stretches are compositionally biased toward low complexity: residues 29–43 and 74–104; these read KSSTSSSKSAASKPS and QSKTAQAQPQPSAQSTNKPSFQNGQQSGGNQ. 2 stretches are compositionally biased toward polar residues: residues 112–123 and 151–176; these read DPYQTGSYQGPY and PKNTVQSGYQQPMPGQQSMQVPNNGP.

As to expression, component of the acid-soluble organic matrix of calcified layers of the shell (at protein level).

Its subcellular location is the secreted. This is an uncharacterized protein from Lottia gigantea (Giant owl limpet).